A 184-amino-acid polypeptide reads, in one-letter code: Putative lyase MJ0807 (184 aa).

Belongs to the chorismate pyruvate-lyase type 2 family.

This Methanocaldococcus jannaschii (strain ATCC 43067 / DSM 2661 / JAL-1 / JCM 10045 / NBRC 100440) (Methanococcus jannaschii) protein is Putative lyase MJ0807.